The sequence spans 921 residues: Translation initiation factor IF-2 (921 aa).

The tract at residues 1–296 is disordered; it reads MADNNTPGDK…PGPQKQRGRL (296 aa). Residues 80-89 show a composition bias toward low complexity; the sequence is RPSGPRPGSS. Residues 116–182 are compositionally biased toward basic and acidic residues; that stretch reads ARVRDMEERR…AKKRFGEGEA (67 aa). A compositionally biased stretch (low complexity) spans 183-257; that stretch reads PRPATAAPQQ…LGRAPGVAAG (75 aa). In terms of domain architecture, tr-type G spans 417–586; the sequence is PRSPVVTVMG…MIALQADILD (170 aa). The tract at residues 426–433 is G1; the sequence is GHVDHGKT. 426–433 is a binding site for GTP; the sequence is GHVDHGKT. A G2 region spans residues 451 to 455; the sequence is GITQH. Positions 474-477 are G3; that stretch reads DTPG. GTP is bound by residues 474-478 and 528-531; these read DTPGH and NKID. A G4 region spans residues 528–531; the sequence is NKID. Positions 564 to 566 are G5; that stretch reads SAK.

This sequence belongs to the TRAFAC class translation factor GTPase superfamily. Classic translation factor GTPase family. IF-2 subfamily.

The protein localises to the cytoplasm. Its function is as follows. One of the essential components for the initiation of protein synthesis. Protects formylmethionyl-tRNA from spontaneous hydrolysis and promotes its binding to the 30S ribosomal subunits. Also involved in the hydrolysis of GTP during the formation of the 70S ribosomal complex. The sequence is that of Translation initiation factor IF-2 from Bradyrhizobium sp. (strain BTAi1 / ATCC BAA-1182).